We begin with the raw amino-acid sequence, 285 residues long: 2-dehydro-3-deoxyphosphooctonate aldolase (285 aa).

This sequence belongs to the KdsA family.

The protein localises to the cytoplasm. The catalysed reaction is D-arabinose 5-phosphate + phosphoenolpyruvate + H2O = 3-deoxy-alpha-D-manno-2-octulosonate-8-phosphate + phosphate. It functions in the pathway carbohydrate biosynthesis; 3-deoxy-D-manno-octulosonate biosynthesis; 3-deoxy-D-manno-octulosonate from D-ribulose 5-phosphate: step 2/3. The protein operates within bacterial outer membrane biogenesis; lipopolysaccharide biosynthesis. This is 2-dehydro-3-deoxyphosphooctonate aldolase from Albidiferax ferrireducens (strain ATCC BAA-621 / DSM 15236 / T118) (Rhodoferax ferrireducens).